Reading from the N-terminus, the 468-residue chain is MATTVMALAEKVLERVYGTSKSAVSVTSGDGEKTHRHTHHHIHRIKSYDDIDEDESSLELIQIGAERTKNVLILMSDTGGGHRASAEAIRDAFKIEFGDKYRVIVKDVWKEYTGWPLNDMERSYKFMVKHVQLWKVAFHSTSPKWIHSCYLAAIAAYYAKEVEAGLMEYKPEIIISVHPLMQHIPLWVLKWQELQKRVLFVTVITDLNTCHPTWFHPGVNRCYCPSQEVAKRALFDGLDESQVRVFGLPVRPSFARAVLVKDDLRKELEMDQDLRAVLLMGGGEGMGPVKETAKALEEFLYDKENRKPIGQMVVICGRNKKLASALEAIDWKIPVKVRGFETQMEKWMGACDCIITKAGPGTIAESLIRSLPIILNDYIPGQEKGNVPYVVENGAGVFTRSPKETARIVGEWFSTKTDELEQTSDNARKLAQPEAVFDIVKDIDELSEQRGPLASVSYNLTSSFASLV.

Residues His82, Arg251, 361–365 (GTIAE), and Glu383 contribute to the UDP site.

The protein belongs to the glycosyltransferase 28 family. As to expression, expressed mainly in floral buds. Detected in roots, leaves, stems, siliques and pollen tubes.

It is found in the plastid. It localises to the chloroplast outer membrane. The catalysed reaction is a 1,2-diacyl-sn-glycerol + UDP-alpha-D-galactose = a 1,2-diacyl-3-O-(beta-D-galactosyl)-sn-glycerol + UDP + H(+). It carries out the reaction 1,2-di-(9Z,12Z-octadecadienoyl)-sn-glycerol + UDP-alpha-D-galactose = 1,2-di-(9Z,12Z-octadecadienoyl)-3-beta-D-galactosyl-sn-glycerol + UDP + H(+). The enzyme catalyses 1-(9Z-octadecenoyl)-2-hexadecanoyl-sn-glycerol + UDP-alpha-D-galactose = 1-(9Z-octadecenoyl)-2-hexadecanoyl-3-beta-D-galactosyl-sn-glycerol + UDP + H(+). It catalyses the reaction 1,2-di-(9Z-octadecenoyl)-sn-glycerol + UDP-alpha-D-galactose = 1,2-di-(9Z-octadecenoyl)-3-beta-D-galactosyl-sn-glycerol + UDP + H(+). Inhibited by galvestine-1. In terms of biological role, involved in the synthesis of monogalactosyldiacylglycerol, the major structural component of photosynthetic membranes and in the chloroplast envelope biogenesis. Can use both prokaryotic (18:1/16:0) or eukaryotic (18:2/18:2) 1,2-diacylglycerol species, but operates with some preference for the eukaryotic one. Plays a minor role in galactolipid synthesis in chloroplasts. Is required for membrane lipid remodeling in phosphate-starved roots. Acts as the minor factor involved in digalactosyldiacylglycerol (DGDG) biosynthesis in phosphate-starved roots. Does not seem to be required for plant growth under nutrient-sufficient conditions. Required for membrane lipid remodeling in plants grown in acidic conditions. In Arabidopsis thaliana (Mouse-ear cress), this protein is Monogalactosyldiacylglycerol synthase 2, chloroplastic.